The sequence spans 660 residues: ATPase WRNIP1 (660 aa).

The UBZ4-type zinc-finger motif lies at 17 to 44 (QVQCPVCQQMMPAAHINSHLDRCLLLHP). Residues cysteine 20, cysteine 23, histidine 31, histidine 35, and cysteine 39 each contribute to the Zn(2+) site. The disordered stretch occupies residues 50–191 (PAAGPHRAGE…DDPGHWDADA (142 aa)). Residues serine 65 and serine 75 each carry the phosphoserine modification. A compositionally biased stretch (polar residues) spans 76–89 (ESSALKQPATPTAA). Lysine 81 participates in a covalent cross-link: Glycyl lysine isopeptide (Lys-Gly) (interchain with G-Cter in ubiquitin). A Phosphothreonine modification is found at threonine 85. 2 positions are modified to phosphoserine: serine 91 and serine 92. The segment covering 92–104 (SEGEGEEGDDGGE) has biased composition (acidic residues). The residue at position 116 (threonine 116) is a Phosphothreonine. Positions 135–155 (ARKGLGKRPAAAAAAGSASPR) are enriched in low complexity. A Glycyl lysine isopeptide (Lys-Gly) (interchain with G-Cter in ubiquitin) cross-link involves residue lysine 141. Serine 153 bears the Phosphoserine mark. Residues 159 to 182 (ETEAQEEEEAGVDGDGDADVDGED) are compositionally biased toward acidic residues. Lysine 220 is covalently cross-linked (Glycyl lysine isopeptide (Lys-Gly) (interchain with G-Cter in ubiquitin)). 265–271 (PGCGKTT) contributes to the ATP binding site. Glycyl lysine isopeptide (Lys-Gly) (interchain with G-Cter in ubiquitin) cross-links involve residues lysine 296, lysine 305, lysine 311, lysine 317, and lysine 330. Residue lysine 477 forms a Glycyl lysine isopeptide (Lys-Gly) (interchain with G-Cter in SUMO2); alternate linkage. Lysine 477 participates in a covalent cross-link: Glycyl lysine isopeptide (Lys-Gly) (interchain with G-Cter in ubiquitin); alternate. Phosphotyrosine is present on residues tyrosine 529 and tyrosine 557. A Glycyl lysine isopeptide (Lys-Gly) (interchain with G-Cter in ubiquitin) cross-link involves residue lysine 622. Lysine 628 participates in a covalent cross-link: Glycyl lysine isopeptide (Lys-Gly) (interchain with G-Cter in ubiquitin); alternate. Lysine 628 is modified (N6-acetyllysine; alternate). Residue lysine 631 forms a Glycyl lysine isopeptide (Lys-Gly) (interchain with G-Cter in ubiquitin) linkage.

Belongs to the AAA ATPase family. RarA/MGS1/WRNIP1 subfamily. Forms homooligomers, possibly octamers. Directly interacts with POLD1, POLD2 and POLD4. Interacts with the N-terminal domain of WRN. Interacts (via UBZ4-type zinc finger) with monoubiquitin and polyubiquitin. Interacts with TRIM14 and PPP6C; these interactions positively regulate the RIGI signaling pathway. Sumoylated with SUMO1 and SUMO2/3. In terms of tissue distribution, ubiquitously expressed.

The protein resides in the nucleus. It localises to the cytoplasm. The enzyme catalyses ATP + H2O = ADP + phosphate + H(+). Functions as a modulator of initiation or reinitiation events during DNA polymerase delta-mediated DNA synthesis. In the presence of ATP, stimulation of DNA polymerase delta-mediated DNA synthesis is decreased. Also plays a role in the innate immune defense against viruses. Stabilizes the RIGI dsRNA interaction and promotes RIGI 'Lys-63'-linked polyubiquitination. In turn, RIGI transmits the signal through mitochondrial MAVS. The chain is ATPase WRNIP1 from Rattus norvegicus (Rat).